Consider the following 114-residue polypeptide: UPF0339 protein plu2779 (114 aa).

A run of 2 repeats spans residues 11-59 and 62-110.

It belongs to the UPF0339 family. Duplicated subfamily.

The sequence is that of UPF0339 protein plu2779 from Photorhabdus laumondii subsp. laumondii (strain DSM 15139 / CIP 105565 / TT01) (Photorhabdus luminescens subsp. laumondii).